A 223-amino-acid chain; its full sequence is Putative N-acetylmannosamine-6-phosphate 2-epimerase (223 aa).

This sequence belongs to the NanE family.

It catalyses the reaction an N-acyl-D-glucosamine 6-phosphate = an N-acyl-D-mannosamine 6-phosphate. The protein operates within amino-sugar metabolism; N-acetylneuraminate degradation; D-fructose 6-phosphate from N-acetylneuraminate: step 3/5. Converts N-acetylmannosamine-6-phosphate (ManNAc-6-P) to N-acetylglucosamine-6-phosphate (GlcNAc-6-P). The polypeptide is Putative N-acetylmannosamine-6-phosphate 2-epimerase (Staphylococcus haemolyticus (strain JCSC1435)).